The sequence spans 87 residues: Cell division topological specificity factor (87 aa).

Belongs to the MinE family.

Functionally, prevents the cell division inhibition by proteins MinC and MinD at internal division sites while permitting inhibition at polar sites. This ensures cell division at the proper site by restricting the formation of a division septum at the midpoint of the long axis of the cell. The chain is Cell division topological specificity factor from Neisseria meningitidis serogroup C (strain 053442).